The following is a 139-amino-acid chain: Large ribosomal subunit protein uL16 (139 aa).

It belongs to the universal ribosomal protein uL16 family. Part of the 50S ribosomal subunit.

Functionally, binds 23S rRNA and is also seen to make contacts with the A and possibly P site tRNAs. The chain is Large ribosomal subunit protein uL16 from Rippkaea orientalis (strain PCC 8801 / RF-1) (Cyanothece sp. (strain PCC 8801)).